The primary structure comprises 361 residues: MGYISMSVVAFLVVFASPVVLATDTDPIPENRAQIPQWFKTNVKPYSQRKGTLDPALEAAEAARQIITVNQKGGANFKTLNEAIKSIPTGNKNRVIIKLAPGVYNEKVTIDIARPFITLLGQPGAETVLTYHGTAAQYGTVESATLIVWAEYFQAAHLTIKNTAPMPKPGSQGQALAMRINADKAAFYSCRFHGFQDTLCDDKGNHFFKDCYIEGTYDFIFGRGASLYLNTQLHAVGDGLRVITAQGRQSATEQNGYTFVHCKVTGTGTGIYLGRSWMSHPKVVYAFTEMTSVVNPSGWRENLNRGYDKTVFYGEYKCFGPGSHLEKRVPYTQDIDKNEVTPFLTLGYIKGSTWLLPPPKY.

An N-terminal signal peptide occupies residues methionine 1 to alanine 22. Residue glutamine 174 participates in substrate binding. The Proton donor role is filled by aspartate 197. Aspartate 218 acts as the Nucleophile in catalysis. Substrate contacts are provided by arginine 275 and tryptophan 277.

It belongs to the pectinesterase family. Expressed in flower buds.

The protein localises to the secreted. Its subcellular location is the cell wall. The enzyme catalyses [(1-&gt;4)-alpha-D-galacturonosyl methyl ester](n) + n H2O = [(1-&gt;4)-alpha-D-galacturonosyl](n) + n methanol + n H(+). Its pathway is glycan metabolism; pectin degradation; 2-dehydro-3-deoxy-D-gluconate from pectin: step 1/5. Its function is as follows. Acts in the modification of cell walls via demethylesterification of cell wall pectin. In Arabidopsis thaliana (Mouse-ear cress), this protein is Probable pectinesterase 50 (PME50).